Here is a 175-residue protein sequence, read N- to C-terminus: Nudix hydrolase 25 (175 aa).

The Nudix hydrolase domain occupies 7-155 (GYRPNVGVCL…KRPTYEEVIK (149 aa)). Positions 40, 55, and 59 each coordinate Mn(2+). The Nudix box motif lies at 40-61 (GGIEDGEDPKSAAMRELQEETG).

This sequence belongs to the Nudix hydrolase family. It depends on Mn(2+) as a cofactor.

It catalyses the reaction P(1),P(4)-bis(5'-guanosyl) tetraphosphate + H2O = GMP + GTP + 2 H(+). Mediates the hydrolysis of diadenosine 5',5''-P(1)P(4) tetraphosphate (Ap(4)A), a signaling molecule involved in regulation of DNA replication and repair. The sequence is that of Nudix hydrolase 25 from Arabidopsis thaliana (Mouse-ear cress).